A 532-amino-acid chain; its full sequence is 2,3-bisphosphoglycerate-independent phosphoglycerate mutase (532 aa).

Positions 15 and 65 each coordinate Mn(2+). S65 (phosphoserine intermediate) is an active-site residue. Residues H126, 156 to 157 (RD), R188, R194, 258 to 261 (RPDR), and K331 each bind substrate. Mn(2+)-binding residues include D398, H402, D439, H440, and H457.

This sequence belongs to the BPG-independent phosphoglycerate mutase family. As to quaternary structure, monomer. The cofactor is Mn(2+).

It catalyses the reaction (2R)-2-phosphoglycerate = (2R)-3-phosphoglycerate. Its pathway is carbohydrate degradation; glycolysis; pyruvate from D-glyceraldehyde 3-phosphate: step 3/5. Its function is as follows. Catalyzes the interconversion of 2-phosphoglycerate and 3-phosphoglycerate. The chain is 2,3-bisphosphoglycerate-independent phosphoglycerate mutase from Gloeothece citriformis (strain PCC 7424) (Cyanothece sp. (strain PCC 7424)).